Here is a 514-residue protein sequence, read N- to C-terminus: Proline--tRNA ligase (514 aa).

It belongs to the class-II aminoacyl-tRNA synthetase family. ProS type 3 subfamily. In terms of assembly, homodimer.

It is found in the cytoplasm. The enzyme catalyses tRNA(Pro) + L-proline + ATP = L-prolyl-tRNA(Pro) + AMP + diphosphate. Functionally, catalyzes the attachment of proline to tRNA(Pro) in a two-step reaction: proline is first activated by ATP to form Pro-AMP and then transferred to the acceptor end of tRNA(Pro). This chain is Proline--tRNA ligase, found in Erythrobacter litoralis (strain HTCC2594).